The primary structure comprises 385 residues: 1-deoxy-D-xylulose 5-phosphate reductoisomerase (385 aa).

NADPH-binding residues include T10, G11, S12, I13, G36, N38, and N122. K123 contributes to the 1-deoxy-D-xylulose 5-phosphate binding site. NADPH is bound at residue E124. D148 is a binding site for Mn(2+). 4 residues coordinate 1-deoxy-D-xylulose 5-phosphate: S149, E150, S174, and H197. A Mn(2+)-binding site is contributed by E150. G203 contacts NADPH. S210, N215, K216, and E219 together coordinate 1-deoxy-D-xylulose 5-phosphate. Position 219 (E219) interacts with Mn(2+).

Belongs to the DXR family. The cofactor is Mg(2+). Mn(2+) is required as a cofactor.

It catalyses the reaction 2-C-methyl-D-erythritol 4-phosphate + NADP(+) = 1-deoxy-D-xylulose 5-phosphate + NADPH + H(+). It functions in the pathway isoprenoid biosynthesis; isopentenyl diphosphate biosynthesis via DXP pathway; isopentenyl diphosphate from 1-deoxy-D-xylulose 5-phosphate: step 1/6. Catalyzes the NADPH-dependent rearrangement and reduction of 1-deoxy-D-xylulose-5-phosphate (DXP) to 2-C-methyl-D-erythritol 4-phosphate (MEP). The sequence is that of 1-deoxy-D-xylulose 5-phosphate reductoisomerase from Geobacter sp. (strain M21).